We begin with the raw amino-acid sequence, 412 residues long: CCA-adding enzyme (412 aa).

Residues S41 and K44 each contribute to the ATP site. Residues S41 and K44 each contribute to the CTP site. Residues D53, D55, and D106 each contribute to the Mg(2+) site. H129, K149, and Y158 together coordinate ATP. Positions 129, 149, and 158 each coordinate CTP.

This sequence belongs to the tRNA nucleotidyltransferase/poly(A) polymerase family. Archaeal CCA-adding enzyme subfamily. Homodimer. Mg(2+) is required as a cofactor.

The catalysed reaction is a tRNA precursor + 2 CTP + ATP = a tRNA with a 3' CCA end + 3 diphosphate. The enzyme catalyses a tRNA with a 3' CCA end + 2 CTP + ATP = a tRNA with a 3' CCACCA end + 3 diphosphate. Catalyzes the addition and repair of the essential 3'-terminal CCA sequence in tRNAs without using a nucleic acid template. Adds these three nucleotides in the order of C, C, and A to the tRNA nucleotide-73, using CTP and ATP as substrates and producing inorganic pyrophosphate. tRNA 3'-terminal CCA addition is required both for tRNA processing and repair. Also involved in tRNA surveillance by mediating tandem CCA addition to generate a CCACCA at the 3' terminus of unstable tRNAs. While stable tRNAs receive only 3'-terminal CCA, unstable tRNAs are marked with CCACCA and rapidly degraded. This Saccharolobus solfataricus (strain ATCC 35092 / DSM 1617 / JCM 11322 / P2) (Sulfolobus solfataricus) protein is CCA-adding enzyme.